The chain runs to 299 residues: Acetaldehyde dehydrogenase 6 (299 aa).

Cysteine 125 (acyl-thioester intermediate) is an active-site residue. Residues 156–164 and asparagine 275 each bind NAD(+); that span reads GAGPGTRAN.

Belongs to the acetaldehyde dehydrogenase family.

It catalyses the reaction acetaldehyde + NAD(+) + CoA = acetyl-CoA + NADH + H(+). This Rhodococcus jostii (strain RHA1) protein is Acetaldehyde dehydrogenase 6 (hpdG).